The primary structure comprises 447 residues: Ribosomal protein uS12 methylthiotransferase RimO (447 aa).

Residues 4-114 (PKVGFVSLGC…VMEAVHEYVP (111 aa)) enclose the MTTase N-terminal domain. [4Fe-4S] cluster is bound by residues C13, C49, C78, C147, C151, and C154. The 238-residue stretch at 133-370 (LTPKHYAYLK…MQVQQQISAA (238 aa)) folds into the Radical SAM core domain. The region spanning 373-443 (QKRIGQTMTV…EYDLFAKLIK (71 aa)) is the TRAM domain.

This sequence belongs to the methylthiotransferase family. RimO subfamily. Requires [4Fe-4S] cluster as cofactor.

Its subcellular location is the cytoplasm. It carries out the reaction L-aspartate(89)-[ribosomal protein uS12]-hydrogen + (sulfur carrier)-SH + AH2 + 2 S-adenosyl-L-methionine = 3-methylsulfanyl-L-aspartate(89)-[ribosomal protein uS12]-hydrogen + (sulfur carrier)-H + 5'-deoxyadenosine + L-methionine + A + S-adenosyl-L-homocysteine + 2 H(+). In terms of biological role, catalyzes the methylthiolation of an aspartic acid residue of ribosomal protein uS12. The protein is Ribosomal protein uS12 methylthiotransferase RimO of Acinetobacter baumannii (strain SDF).